The chain runs to 380 residues: Probable tRNA-splicing endonuclease subunit sen2 (380 aa).

Catalysis depends on residues tyrosine 281, histidine 289, and lysine 325.

This sequence belongs to the tRNA-intron endonuclease family. Heterotetramer composed of sen2, sen15, sen34 and sen54. Interacts directly with sen54.

The enzyme catalyses pretRNA = a 3'-half-tRNA molecule with a 5'-OH end + a 5'-half-tRNA molecule with a 2',3'-cyclic phosphate end + an intron with a 2',3'-cyclic phosphate and a 5'-hydroxyl terminus.. Its function is as follows. Constitutes one of the two catalytic subunit of the tRNA-splicing endonuclease complex, a complex responsible for identification and cleavage of the splice sites in pre-tRNA. It cleaves pre-tRNA at the 5'- and 3'-splice sites to release the intron. The products are an intron and two tRNA half-molecules bearing 2',3'-cyclic phosphate and 5'-OH termini. There are no conserved sequences at the splice sites, but the intron is invariably located at the same site in the gene, placing the splice sites an invariant distance from the constant structural features of the tRNA body. This subunit may anchor the endonuclease complex to the nuclear membrane. Probably carries the active site for 5'-splice site cleavage. In Schizosaccharomyces pombe (strain 972 / ATCC 24843) (Fission yeast), this protein is Probable tRNA-splicing endonuclease subunit sen2 (sen2).